Reading from the N-terminus, the 183-residue chain is Glutamyl-tRNA(Gln) amidotransferase subunit F, mitochondrial (183 aa).

The protein belongs to the GatF family. As to quaternary structure, subunit of the heterotrimeric GatFAB amidotransferase (AdT) complex, composed of A (HER2), B (PET112) and F (YGR102C) subunits.

Its subcellular location is the mitochondrion inner membrane. The catalysed reaction is L-glutamyl-tRNA(Gln) + L-glutamine + ATP + H2O = L-glutaminyl-tRNA(Gln) + L-glutamate + ADP + phosphate + H(+). Functionally, allows the formation of correctly charged Gln-tRNA(Gln) through the transamidation of misacylated Glu-tRNA(Gln) in the mitochondria. The reaction takes place in the presence of glutamine and ATP through an activated gamma-phospho-Glu-tRNA(Gln). Required for proper protein synthesis within the mitochondrion. This Saccharomyces cerevisiae (strain ATCC 204508 / S288c) (Baker's yeast) protein is Glutamyl-tRNA(Gln) amidotransferase subunit F, mitochondrial.